A 224-amino-acid chain; its full sequence is Oxalate oxidase GF-2.8 (224 aa).

An N-terminal signal peptide occupies residues 1–23; that stretch reads MGYSKTLVAGLFAMLLLAPAVLA. A disulfide bridge connects residues Cys-33 and Cys-49. The Cupin type-1 domain maps to 63–214; that stretch reads SKLAKAGNTS…ALRVEARVVE (152 aa). N-linked (GlcNAc...) asparagine glycans are attached at residues Asn-70 and Asn-75. Residues His-111, His-113, Glu-118, and His-160 each coordinate Mn(2+).

It belongs to the germin family. Oligomer (believed to be a pentamer but probably hexamer).

The protein resides in the secreted. It is found in the extracellular space. The protein localises to the apoplast. It localises to the cytoplasm. Its subcellular location is the cell wall. It carries out the reaction oxalate + O2 + 2 H(+) = H2O2 + 2 CO2. In terms of biological role, produces developmental and stress-related release of hydrogen peroxide in the apoplast. May play an important role in several aspects of plant growth and defense mechanisms. The sequence is that of Oxalate oxidase GF-2.8 from Triticum aestivum (Wheat).